A 174-amino-acid polypeptide reads, in one-letter code: Shikimate kinase 2 (174 aa).

12 to 17 (GCGKTT) is an ATP binding site. Mg(2+)-binding residues include T16 and D32. The substrate site is built by D34, R58, and G79. The interval 112 to 126 (QAAPEEDLRPTLTGK) is LID domain. R120 is a binding site for ATP. R139 is a binding site for substrate.

The protein belongs to the shikimate kinase family. AroL subfamily. Monomer. Mg(2+) is required as a cofactor.

Its subcellular location is the cytoplasm. The catalysed reaction is shikimate + ATP = 3-phosphoshikimate + ADP + H(+). Its pathway is metabolic intermediate biosynthesis; chorismate biosynthesis; chorismate from D-erythrose 4-phosphate and phosphoenolpyruvate: step 5/7. Catalyzes the specific phosphorylation of the 3-hydroxyl group of shikimic acid using ATP as a cosubstrate. The sequence is that of Shikimate kinase 2 from Shigella boydii serotype 4 (strain Sb227).